We begin with the raw amino-acid sequence, 185 residues long: Photosystem I assembly protein Ycf4 (185 aa).

The next 2 membrane-spanning stretches (helical) occupy residues 21–43 and 68–90; these read NFFW…ISSY and FYGI…NVGS.

Belongs to the Ycf4 family.

The protein localises to the plastid. It is found in the chloroplast thylakoid membrane. In terms of biological role, seems to be required for the assembly of the photosystem I complex. In Aegilops tauschii (Tausch's goatgrass), this protein is Photosystem I assembly protein Ycf4.